A 257-amino-acid chain; its full sequence is Type III pantothenate kinase (257 aa).

Residue 6–13 (DVGNTNTV) participates in ATP binding. Substrate-binding positions include Tyr102 and 109-112 (GADR). Asp111 functions as the Proton acceptor in the catalytic mechanism. K(+) is bound at residue Asp131. ATP is bound at residue Thr134. Thr186 is a binding site for substrate.

This sequence belongs to the type III pantothenate kinase family. In terms of assembly, homodimer. NH4(+) is required as a cofactor. The cofactor is K(+).

The protein localises to the cytoplasm. The enzyme catalyses (R)-pantothenate + ATP = (R)-4'-phosphopantothenate + ADP + H(+). It functions in the pathway cofactor biosynthesis; coenzyme A biosynthesis; CoA from (R)-pantothenate: step 1/5. Catalyzes the phosphorylation of pantothenate (Pan), the first step in CoA biosynthesis. This chain is Type III pantothenate kinase, found in Leptospira interrogans serogroup Icterohaemorrhagiae serovar copenhageni (strain Fiocruz L1-130).